The sequence spans 293 residues: ATP synthase gamma chain (293 aa).

The protein belongs to the ATPase gamma chain family. As to quaternary structure, F-type ATPases have 2 components, CF(1) - the catalytic core - and CF(0) - the membrane proton channel. CF(1) has five subunits: alpha(3), beta(3), gamma(1), delta(1), epsilon(1). CF(0) has three main subunits: a, b and c.

It localises to the cell inner membrane. Produces ATP from ADP in the presence of a proton gradient across the membrane. The gamma chain is believed to be important in regulating ATPase activity and the flow of protons through the CF(0) complex. The sequence is that of ATP synthase gamma chain from Nitratidesulfovibrio vulgaris (strain DSM 19637 / Miyazaki F) (Desulfovibrio vulgaris).